A 351-amino-acid chain; its full sequence is Apolipoprotein L4 (351 aa).

A signal peptide spans 1-21 (MEGAALLKIFVVCIWVQQNHP).

This sequence belongs to the apolipoprotein L family. In terms of tissue distribution, widely expressed; the highest levels are in spinal cord, placenta, adrenal gland; also detected in spleen, bone marrow, uterus, trachea, mammary gland and testis; levels are low in brain, heart and pancreas.

The protein localises to the secreted. Functionally, may play a role in lipid exchange and transport throughout the body. May participate in reverse cholesterol transport from peripheral cells to the liver. The protein is Apolipoprotein L4 (APOL4) of Homo sapiens (Human).